The chain runs to 303 residues: L(+)-tartrate dehydratase subunit alpha (303 aa).

Iron-sulfur cluster-binding residues include Cys71, Cys190, and Cys277.

This sequence belongs to the class-I fumarase family. As to quaternary structure, tetramer of two alpha and two beta subunits. Iron-sulfur cluster is required as a cofactor.

It carries out the reaction (2R,3R)-tartrate = oxaloacetate + H2O. In Escherichia coli O157:H7, this protein is L(+)-tartrate dehydratase subunit alpha (ttdA).